A 433-amino-acid chain; its full sequence is tRNA-2-methylthio-N(6)-dimethylallyladenosine synthase (433 aa).

Residues 4–119 (KKLFIQTLGC…ITQAIKTPKF (116 aa)) form the MTTase N-terminal domain. Residues Cys13, Cys50, Cys82, Cys151, Cys155, and Cys158 each coordinate [4Fe-4S] cluster. The Radical SAM core domain maps to 137–370 (RNSIYKSYIN…QNRHSEILDK (234 aa)). Residues 373 to 433 (KKQENKTFKV…KRMVLYGEIV (61 aa)) form the TRAM domain.

Belongs to the methylthiotransferase family. MiaB subfamily. In terms of assembly, monomer. [4Fe-4S] cluster serves as cofactor.

It localises to the cytoplasm. The catalysed reaction is N(6)-dimethylallyladenosine(37) in tRNA + (sulfur carrier)-SH + AH2 + 2 S-adenosyl-L-methionine = 2-methylsulfanyl-N(6)-dimethylallyladenosine(37) in tRNA + (sulfur carrier)-H + 5'-deoxyadenosine + L-methionine + A + S-adenosyl-L-homocysteine + 2 H(+). In terms of biological role, catalyzes the methylthiolation of N6-(dimethylallyl)adenosine (i(6)A), leading to the formation of 2-methylthio-N6-(dimethylallyl)adenosine (ms(2)i(6)A) at position 37 in tRNAs that read codons beginning with uridine. This Campylobacter jejuni subsp. jejuni serotype O:2 (strain ATCC 700819 / NCTC 11168) protein is tRNA-2-methylthio-N(6)-dimethylallyladenosine synthase.